Reading from the N-terminus, the 200-residue chain is Inner membrane-spanning protein YciB (200 aa).

A run of 6 helical transmembrane segments spans residues 1–21, 37–57, 66–86, 103–123, 136–156, and 167–187; these read MPPLLKLALELGPLLVFFFAN, IGAPIFLATALFMAATVIALA, LPIMPLVSGIVVLVFGALTLW, LFGGILLGGLFFGKSLLGYVF, KLTLRWGLFFIFLAIVNEIVW, and FKVWGIMPITIVFTLLQMPLI.

This sequence belongs to the YciB family.

Its subcellular location is the cell inner membrane. Plays a role in cell envelope biogenesis, maintenance of cell envelope integrity and membrane homeostasis. The chain is Inner membrane-spanning protein YciB from Brucella suis biovar 1 (strain 1330).